The primary structure comprises 421 residues: Ribulose bisphosphate carboxylase large chain (421 aa).

Substrate is bound by residues Asn-68 and Thr-118. The active-site Proton acceptor is Lys-120. Lys-122 contributes to the substrate binding site. Mg(2+) is bound by residues Lys-146, Asp-148, and Glu-149. Lys-146 is subject to N6-carboxylysine. The active-site Proton acceptor is His-239. Substrate contacts are provided by Arg-240, His-272, and Ser-324.

This sequence belongs to the RuBisCO large chain family. Type I subfamily. In terms of assembly, heterohexadecamer of 8 large chains and 8 small chains; disulfide-linked. The disulfide link is formed within the large subunit homodimers. Mg(2+) is required as a cofactor. In terms of processing, the disulfide bond which can form in the large chain dimeric partners within the hexadecamer appears to be associated with oxidative stress and protein turnover.

The protein localises to the plastid. It localises to the chloroplast. It catalyses the reaction 2 (2R)-3-phosphoglycerate + 2 H(+) = D-ribulose 1,5-bisphosphate + CO2 + H2O. The enzyme catalyses D-ribulose 1,5-bisphosphate + O2 = 2-phosphoglycolate + (2R)-3-phosphoglycerate + 2 H(+). Functionally, ruBisCO catalyzes two reactions: the carboxylation of D-ribulose 1,5-bisphosphate, the primary event in carbon dioxide fixation, as well as the oxidative fragmentation of the pentose substrate in the photorespiration process. Both reactions occur simultaneously and in competition at the same active site. The sequence is that of Ribulose bisphosphate carboxylase large chain (rbcL) from Aegilops tauschii (Tausch's goatgrass).